Consider the following 776-residue polypeptide: Protein translocase subunit SecA 2 (776 aa).

ATP is bound by residues glutamine 80, 98–102 (GEGKT), and aspartate 486.

The protein belongs to the SecA family. In terms of assembly, monomer and homodimer. Part of the essential Sec protein translocation apparatus which comprises SecA, SecYEG and auxiliary proteins SecDF. Other proteins may also be involved.

It localises to the cell membrane. Its subcellular location is the cytoplasm. It catalyses the reaction ATP + H2O + cellular proteinSide 1 = ADP + phosphate + cellular proteinSide 2.. In terms of biological role, part of the Sec protein translocase complex. Interacts with the SecYEG preprotein conducting channel. Has a central role in coupling the hydrolysis of ATP to the transfer of proteins into and across the cell membrane, serving as an ATP-driven molecular motor driving the stepwise translocation of polypeptide chains across the membrane. The chain is Protein translocase subunit SecA 2 from Listeria monocytogenes serotype 4b (strain F2365).